The sequence spans 399 residues: Beta sliding clamp (399 aa).

Belongs to the beta sliding clamp family. In terms of assembly, forms a ring-shaped head-to-tail homodimer around DNA which binds and tethers DNA polymerases and other proteins to the DNA. The DNA replisome complex has a single clamp-loading complex (3 tau and 1 each of delta, delta', psi and chi subunits) which binds 3 Pol III cores (1 core on the leading strand and 2 on the lagging strand) each with a beta sliding clamp dimer. Additional proteins in the replisome are other copies of gamma, psi and chi, Ssb, DNA helicase and RNA primase.

Its subcellular location is the cytoplasm. Functionally, confers DNA tethering and processivity to DNA polymerases and other proteins. Acts as a clamp, forming a ring around DNA (a reaction catalyzed by the clamp-loading complex) which diffuses in an ATP-independent manner freely and bidirectionally along dsDNA. Initially characterized for its ability to contact the catalytic subunit of DNA polymerase III (Pol III), a complex, multichain enzyme responsible for most of the replicative synthesis in bacteria; Pol III exhibits 3'-5' exonuclease proofreading activity. The beta chain is required for initiation of replication as well as for processivity of DNA replication. This Mycobacterium leprae (strain TN) protein is Beta sliding clamp (dnaN).